A 166-amino-acid chain; its full sequence is PTS system glucose-specific EIIA component (166 aa).

The region spanning 34–138 (DPVFAQKMMG…SVISPIIITN (105 aa)) is the PTS EIIA type-1 domain. Zn(2+)-binding residues include H71 and H86. The active-site Tele-phosphohistidine intermediate; for EIIA activity is the H86. Position 86 is a phosphohistidine; by HPr (H86).

As to quaternary structure, heterodimer with glycerol kinase (glpk). Requires Zn(2+) as cofactor.

The protein localises to the cytoplasm. Its function is as follows. The phosphoenolpyruvate-dependent sugar phosphotransferase system (sugar PTS), a major carbohydrate active transport system, catalyzes the phosphorylation of incoming sugar substrates concomitantly with their translocation across the cell membrane. The enzyme II complex composed of PtsG and Crr is involved in glucose transport. This is PTS system glucose-specific EIIA component (crr) from Staphylococcus aureus (strain COL).